A 124-amino-acid chain; its full sequence is Large ribosomal subunit protein bL12 (124 aa).

It belongs to the bacterial ribosomal protein bL12 family. In terms of assembly, homodimer. Part of the ribosomal stalk of the 50S ribosomal subunit. Forms a multimeric L10(L12)X complex, where L10 forms an elongated spine to which 2 to 4 L12 dimers bind in a sequential fashion. Binds GTP-bound translation factors.

Its function is as follows. Forms part of the ribosomal stalk which helps the ribosome interact with GTP-bound translation factors. Is thus essential for accurate translation. The protein is Large ribosomal subunit protein bL12 of Cereibacter sphaeroides (strain ATCC 17025 / ATH 2.4.3) (Rhodobacter sphaeroides).